A 119-amino-acid chain; its full sequence is Beta-2-microglobulin (119 aa).

Positions 1-20 (MSRSVALAVLALLSLSGLEA) are cleaved as a signal peptide. The region spanning 25–114 (PKIQVYSRHP…VTLSGPRTVK (90 aa)) is the Ig-like C1-type domain. Cysteines 45 and 100 form a disulfide.

Belongs to the beta-2-microglobulin family. In terms of assembly, heterodimer of an alpha chain and a beta chain. Beta-2-microglobulin is the beta-chain of major histocompatibility complex class I molecules.

The protein localises to the secreted. In terms of biological role, component of the class I major histocompatibility complex (MHC). Involved in the presentation of peptide antigens to the immune system. This Papio anubis (Olive baboon) protein is Beta-2-microglobulin (B2M).